The chain runs to 95 residues: Enhancer of yellow 2 transcription factor (95 aa).

Belongs to the ENY2 family. Component of the nuclear pore complex (NPC)-associated AMEX complex (anchoring and mRNA export complex), composed of at least e(y)2 and xmas-2. Component of the SAGA transcription coactivator-HAT complexes, at least composed of Ada2b, e(y)2, Pcaf/Gcn5, Taf10 and Nipped-A/Trrap. Within the SAGA complex, e(y)2, Sgf11, and not/nonstop form an additional subcomplex of SAGA called the DUB module (deubiquitination module). Component of the THO complex, composed of at least e(y)2, HPR1, THO2, THOC5, THOC6 and THOC7. Interacts with e(y)1. Interacts with su(Hw) (via zinc fingers). Interacts with xmas-2; required for localization to the nuclear periphery. Interacts with the nuclear pore complex (NPC).

Its subcellular location is the nucleus. The protein resides in the nucleoplasm. It localises to the cytoplasm. In terms of biological role, involved in mRNA export coupled transcription activation by association with both the AMEX and the SAGA complexes. The SAGA complex is a multiprotein complex that activates transcription by remodeling chromatin and mediating histone acetylation and deubiquitination. Within the SAGA complex, participates in a subcomplex that specifically deubiquitinates histone H2B. The SAGA complex is recruited to specific gene promoters by activators, where it is required for transcription. Required for nuclear receptor-mediated transactivation. Involved in transcription elongation by recruiting the THO complex onto nascent mRNA. The AMEX complex functions in docking export-competent ribonucleoprotein particles (mRNPs) to the nuclear entrance of the nuclear pore complex (nuclear basket). AMEX participates in mRNA export and accurate chromatin positioning in the nucleus by tethering genes to the nuclear periphery. The protein is Enhancer of yellow 2 transcription factor of Drosophila virilis (Fruit fly).